Here is a 146-residue protein sequence, read N- to C-terminus: Hemoglobin cathodic subunit beta (146 aa).

Positions 2–146 constitute a Globin domain; sequence QWSSSERSTI…VVSALSRQYF (145 aa). Heme b is bound by residues histidine 63 and histidine 92.

It belongs to the globin family. In terms of assembly, heterotetramer of two alpha chains and two beta chains. As to expression, red blood cells.

Involved in oxygen transport from the gills to the various peripheral tissues. The protein is Hemoglobin cathodic subunit beta of Conger conger (Conger eel).